The primary structure comprises 580 residues: Multidrug resistance-like ATP-binding protein MdlB (580 aa).

Residues isoleucine 25–glutamine 310 form the ABC transmembrane type-1 domain. 5 consecutive transmembrane segments (helical) span residues isoleucine 26–isoleucine 46, phenylalanine 61–phenylalanine 81, valine 142–threonine 162, tryptophan 165–tyrosine 185, and leucine 258–valine 278. Positions isoleucine 341–phenylalanine 575 constitute an ABC transporter domain. Glycine 375 to serine 382 is a binding site for ATP.

The protein belongs to the ABC transporter superfamily. Drug exporter-2 (TC 3.A.1.117) family.

Its subcellular location is the cell membrane. The catalysed reaction is ATP + H2O + xenobioticSide 1 = ADP + phosphate + xenobioticSide 2.. In Buchnera aphidicola subsp. Schizaphis graminum (strain Sg), this protein is Multidrug resistance-like ATP-binding protein MdlB (mdlB).